We begin with the raw amino-acid sequence, 160 residues long: SsrA-binding protein (160 aa).

The tract at residues 131–160 is disordered; it reads KKEFDKRHTEKERDSDREIQRAMRTKGKDD.

The protein belongs to the SmpB family.

The protein resides in the cytoplasm. Required for rescue of stalled ribosomes mediated by trans-translation. Binds to transfer-messenger RNA (tmRNA), required for stable association of tmRNA with ribosomes. tmRNA and SmpB together mimic tRNA shape, replacing the anticodon stem-loop with SmpB. tmRNA is encoded by the ssrA gene; the 2 termini fold to resemble tRNA(Ala) and it encodes a 'tag peptide', a short internal open reading frame. During trans-translation Ala-aminoacylated tmRNA acts like a tRNA, entering the A-site of stalled ribosomes, displacing the stalled mRNA. The ribosome then switches to translate the ORF on the tmRNA; the nascent peptide is terminated with the 'tag peptide' encoded by the tmRNA and targeted for degradation. The ribosome is freed to recommence translation, which seems to be the essential function of trans-translation. The sequence is that of SsrA-binding protein from Stutzerimonas stutzeri (strain A1501) (Pseudomonas stutzeri).